Consider the following 141-residue polypeptide: Hemoglobin subunit alpha (141 aa).

One can recognise a Globin domain in the interval 1-141 (VLSADDKANV…VSTVLTSKYR (141 aa)). Ser3 bears the Phosphoserine mark. N6-succinyllysine occurs at positions 7 and 11. Position 16 is an N6-acetyllysine; alternate (Lys16). At Lys16 the chain carries N6-succinyllysine; alternate. Tyr24 is modified (phosphotyrosine). Phosphoserine is present on Ser35. N6-succinyllysine is present on Lys40. A Phosphoserine modification is found at Ser49. His58 is an O2 binding site. His87 is a heme b binding site. A Phosphoserine modification is found at Ser102. Residue Thr108 is modified to Phosphothreonine. 2 positions are modified to phosphoserine: Ser124 and Ser131. 2 positions are modified to phosphothreonine: Thr134 and Thr137. Phosphoserine is present on Ser138.

Belongs to the globin family. As to quaternary structure, heterotetramer of two alpha chains and two beta chains. As to expression, red blood cells.

Its function is as follows. Involved in oxygen transport from the lung to the various peripheral tissues. The polypeptide is Hemoglobin subunit alpha (Peromyscus californicus (California mouse)).